A 223-amino-acid chain; its full sequence is Superoxide dismutase [Mn], mitochondrial (223 aa).

Residues 1 to 24 (MNLIIGVAGRLLVGKNYCLNTQRL) constitute a mitochondrion transit peptide. The Mn(2+) site is built by His50, His98, Asp184, and His188.

This sequence belongs to the iron/manganese superoxide dismutase family. As to quaternary structure, homotetramer. Requires Mn(2+) as cofactor.

The protein resides in the mitochondrion matrix. The catalysed reaction is 2 superoxide + 2 H(+) = H2O2 + O2. Its function is as follows. Destroys superoxide anion radicals which are normally produced within the cells and which are toxic to biological systems. This is Superoxide dismutase [Mn], mitochondrial (sod-2) from Onchocerca volvulus.